The chain runs to 437 residues: Protein translocase subunit SecY (437 aa).

The next 10 membrane-spanning stretches (helical) occupy residues 19 to 39 (LFTL…IPGV), 69 to 89 (LLQI…SIIL), 122 to 142 (VALA…GALF), 157 to 177 (IFTT…VMWL), 189 to 209 (GMSI…LWAI), 219 to 239 (WIEF…VVFV), 275 to 295 (GVIP…IVQF), 318 to 338 (HIIL…AISF), 378 to 398 (GSLY…GFGA), and 400 to 420 (QNFP…LETV).

Belongs to the SecY/SEC61-alpha family. In terms of assembly, component of the Sec protein translocase complex. Heterotrimer consisting of SecY, SecE and SecG subunits. The heterotrimers can form oligomers, although 1 heterotrimer is thought to be able to translocate proteins. Interacts with the ribosome. Interacts with SecDF, and other proteins may be involved. Interacts with SecA.

It localises to the cell membrane. Functionally, the central subunit of the protein translocation channel SecYEG. Consists of two halves formed by TMs 1-5 and 6-10. These two domains form a lateral gate at the front which open onto the bilayer between TMs 2 and 7, and are clamped together by SecE at the back. The channel is closed by both a pore ring composed of hydrophobic SecY resides and a short helix (helix 2A) on the extracellular side of the membrane which forms a plug. The plug probably moves laterally to allow the channel to open. The ring and the pore may move independently. The sequence is that of Protein translocase subunit SecY from Streptomyces lividans.